We begin with the raw amino-acid sequence, 95 residues long: Small ribosomal subunit protein bS6 (95 aa).

This sequence belongs to the bacterial ribosomal protein bS6 family.

In terms of biological role, binds together with bS18 to 16S ribosomal RNA. The chain is Small ribosomal subunit protein bS6 from Geobacillus kaustophilus (strain HTA426).